We begin with the raw amino-acid sequence, 521 residues long: Cytoplasmic polyadenylation element-binding protein 2 (521 aa).

Pro residues predominate over residues 1 to 11 (MNLPQQQPPAA). Disordered stretches follow at residues 1-35 (MNLP…QAAA) and 50-88 (PLLK…NMGI). Positions 12 to 35 (APQQPQSRRSPVSPQLQQQHQAAA) are enriched in low complexity. Serine 21 carries the post-translational modification Phosphoserine. Residues 55-70 (SPWSNHQNSGWGTASM) show a composition bias toward polar residues. RRM domains are found at residues 264–355 (RKVF…PWNL) and 372–454 (KTIF…PYVL).

Belongs to the RRM CPEB family. In terms of assembly, interacts with TENT2/GLD2. As to expression, expressed in embryo, cerebellum, salivary gland, thymus, heart, liver, lung, spleen, kidney, intestine, ovary and round spermatids. Weakly expressed in granular cells of dentate gyrus and the pyramidal cells of CA3 and CA1 of the hippocampus.

Its subcellular location is the cytoplasm. Its function is as follows. May play a role in translational regulation of stored mRNAs in transcriptionally inactive haploid spermatids. Binds to poly(U) RNA oligomers. Required for cell cycle progression, specifically for the transition from metaphase to anaphase. This Mus musculus (Mouse) protein is Cytoplasmic polyadenylation element-binding protein 2 (Cpeb2).